Here is a 115-residue protein sequence, read N- to C-terminus: MNMLLAMLINITLSLLLISIAFWLPQLNIYTEKANPYDWGFDPMSSARLPFSMKFFLVAITFLLFDLEIALLLPIPWAIQIHSINTMMLTAFILVTILALGLAYEWIQKGLEWTE.

A run of 3 helical transmembrane segments spans residues 4 to 24 (LLAMLINITLSLLLISIAFWL), 55 to 75 (FFLVAITFLLFDLEIALLLPI), and 87 to 107 (MMLTAFILVTILALGLAYEWI).

It belongs to the complex I subunit 3 family. Core subunit of respiratory chain NADH dehydrogenase (Complex I) which is composed of 45 different subunits. Interacts with TMEM186. Interacts with TMEM242.

The protein localises to the mitochondrion inner membrane. It carries out the reaction a ubiquinone + NADH + 5 H(+)(in) = a ubiquinol + NAD(+) + 4 H(+)(out). Core subunit of the mitochondrial membrane respiratory chain NADH dehydrogenase (Complex I) which catalyzes electron transfer from NADH through the respiratory chain, using ubiquinone as an electron acceptor. Essential for the catalytic activity of complex I. This chain is NADH-ubiquinone oxidoreductase chain 3, found in Neotoma floridana (Eastern woodrat).